Consider the following 348-residue polypeptide: Protein RecA (348 aa).

An ATP-binding site is contributed by 65 to 72 (GPESSGKT).

It belongs to the RecA family.

The protein resides in the cytoplasm. In terms of biological role, can catalyze the hydrolysis of ATP in the presence of single-stranded DNA, the ATP-dependent uptake of single-stranded DNA by duplex DNA, and the ATP-dependent hybridization of homologous single-stranded DNAs. It interacts with LexA causing its activation and leading to its autocatalytic cleavage. This is Protein RecA from Vibrio anguillarum (Listonella anguillarum).